The primary structure comprises 271 residues: Probable ribosomal RNA small subunit methyltransferase A (271 aa).

5 residues coordinate S-adenosyl-L-methionine: L12, G37, E58, D83, and N100.

Belongs to the class I-like SAM-binding methyltransferase superfamily. rRNA adenine N(6)-methyltransferase family. RsmA subfamily.

The protein resides in the cytoplasm. Specifically dimethylates two adjacent adenosines in the loop of a conserved hairpin near the 3'-end of 16S rRNA in the 30S particle. May play a critical role in biogenesis of 30S subunits. The sequence is that of Probable ribosomal RNA small subunit methyltransferase A from Methanococcus aeolicus (strain ATCC BAA-1280 / DSM 17508 / OCM 812 / Nankai-3).